We begin with the raw amino-acid sequence, 777 residues long: Protein translocase subunit SecA (777 aa).

ATP-binding positions include Q94, 112–116 (GEGKT), and D501.

It belongs to the SecA family. As to quaternary structure, monomer and homodimer. Part of the essential Sec protein translocation apparatus which comprises SecA, SecYEG and auxiliary proteins SecDF. Other proteins may also be involved.

Its subcellular location is the cell membrane. The protein resides in the cytoplasm. The catalysed reaction is ATP + H2O + cellular proteinSide 1 = ADP + phosphate + cellular proteinSide 2.. In terms of biological role, part of the Sec protein translocase complex. Interacts with the SecYEG preprotein conducting channel. Has a central role in coupling the hydrolysis of ATP to the transfer of proteins into and across the cell membrane, serving as an ATP-driven molecular motor driving the stepwise translocation of polypeptide chains across the membrane. The protein is Protein translocase subunit SecA of Mycobacterium avium (strain 104).